We begin with the raw amino-acid sequence, 284 residues long: uncharacterized protein (284 aa).

The 130-residue stretch at 4 to 133 folds into the Photolyase/cryptochrome alpha/beta domain; sequence PLHLFWHRRD…AVHRQWDQLL (130 aa).

This is an uncharacterized protein from Synechococcus sp. (strain PCC 6716).